The chain runs to 580 residues: Acyl-coenzyme A synthetase ACSM3, mitochondrial (580 aa).

A mitochondrion-targeting transit peptide spans Met-1 to Val-21. N6-succinyllysine is present on residues Lys-67 and Lys-100. Lys-151 carries the N6-acetyllysine modification. ATP is bound by residues Thr-229–Lys-237, Glu-368–Thr-373, Asp-455, Arg-470, and Lys-566.

Belongs to the ATP-dependent AMP-binding enzyme family. Mg(2+) serves as cofactor. Mn(2+) is required as a cofactor. As to expression, detected in kidney (at protein level). Detected in kidney proximal tubules and in liver. Detected at low levels in testis, stomach, heart and lung.

The protein resides in the mitochondrion. It localises to the mitochondrion matrix. The enzyme catalyses a medium-chain fatty acid + ATP + CoA = a medium-chain fatty acyl-CoA + AMP + diphosphate. It catalyses the reaction propanoate + ATP + CoA = propanoyl-CoA + AMP + diphosphate. It carries out the reaction butanoate + ATP + CoA = butanoyl-CoA + AMP + diphosphate. The catalysed reaction is 2-methylpropanoate + ATP + CoA = 2-methylpropanoyl-CoA + AMP + diphosphate. The enzyme catalyses 2-methylbutanoate + ATP + CoA = 2-methylbutanoyl-CoA + AMP + diphosphate. It catalyses the reaction octanoate + ATP + CoA = octanoyl-CoA + AMP + diphosphate. In terms of biological role, catalyzes the activation of fatty acids by CoA to produce an acyl-CoA, the first step in fatty acid metabolism. Capable of activating medium-chain fatty acids with a preference for isobutyrate among fatty acids with 2-6 carbon atoms. The sequence is that of Acyl-coenzyme A synthetase ACSM3, mitochondrial (Acsm3) from Mus musculus (Mouse).